The primary structure comprises 410 residues: Meiotic driver wtf18 (410 aa).

Positions 1–39 (MKNKGYPLRSSMDELSTKNDNEIDLEKGPLPEYNSEDGS) are disordered. Residues 11 to 29 (SMDELSTKNDNEIDLEKGP) are compositionally biased toward basic and acidic residues. The next 10 helical transmembrane spans lie at 89 to 109 (LLISVLAVIVVFFTAWVCVNP), 119 to 139 (AFFVTIGITCPILLITIFCFF), 149 to 169 (CIKVTVIFLAQCVKVTAVFLA), 174 to 194 (VTAVFLAKCVKVTAVFLAKCI), 204 to 224 (CVKVTAVFLAKCVKVIAVGLY), 229 to 249 (DLVVTIWLAWVVICFILFGCV), 265 to 285 (CSISAALFFILLLVCIPIWTL), 289 to 309 (LFGLFQVLGVQSCVVIVTKGL), 319 to 339 (ATGYEIEASSLFVIGNFLFFY), and 353 to 373 (FIGNGIASFLGGLGNAFGGIG).

It belongs to the WTF family. In terms of assembly, homomer. Forms protein aggregates. The two isoforms can interact with each other and with themselves. High sequence similarity is required for their interaction.

Its subcellular location is the spore membrane. It is found in the vacuole membrane. The protein localises to the ascus epiplasm. The protein resides in the cytoplasm. It localises to the endoplasmic reticulum membrane. Its function is as follows. Promotes unequal transmission of alleles from the parental zygote to progeny spores by acting as poison/antidote system where the poison and antidote proteins are produced from the same locus; the poison component is trans-acting and targets all spores within an ascus whereas the antidote component is spore-specific, leading to poisoning of all progeny that do not inherit the allele. Functionally, localizes isoform 2 to the vacuole thereby facilitating its degradation. In addition to suppressing isoform 2, also suppresses S.pombe strain 972 wtf13 isoform 2. In terms of biological role, forms toxic aggregates that disrupt spore maturation. The polypeptide is Meiotic driver wtf18 (Schizosaccharomyces pombe (Fission yeast)).